The following is a 575-amino-acid chain: Transcription factor E3 (575 aa).

Serine 47 carries the phosphoserine; by MTOR modification. Residues 90–126 are compositionally biased toward low complexity; it reads ATLSASSSAGGSRTPAMSSSSSSRVLLRQQLMRAQAQ. The tract at residues 90-153 is disordered; that stretch reads ATLSASSSAG…SPAPASPAIS (64 aa). Residues 127–136 show a composition bias toward basic and acidic residues; sequence EQERRERREQ. Position 188 is an asymmetric dimethylarginine (arginine 188). The segment at 211-246 is disordered; the sequence is LASQALTPPPGPASAQPLPAPEAAHTTGPTGSAPNS. Residues 260–271 form a strong transcription activation domain region; that stretch reads EIDDVIDEIISL. Serine 321 carries the phosphoserine; by MTOR modification. Lysine 339 is covalently cross-linked (Glycyl lysine isopeptide (Lys-Gly) (interchain with G-Cter in SUMO2)). The 54-residue stretch at 346 to 399 folds into the bHLH domain; that stretch reads QKKDNHNLIERRRRFNINDRIKELGTLIPKSSDPEMRWNKGTILKASVDYIRKL. The Nuclear localization signal motif lies at 356–359; that stretch reads RRRR. Residues 409–430 are leucine-zipper; it reads LESRQRSLEQANRSLQLRIQEL. 2 disordered regions span residues 473–498 and 534–575; these read GAAT…PPSD and GGLS…EEES. Over residues 539-575 the composition is skewed to low complexity; it reads GALSPLRAASDPLLSSVSPAVSKASSRRSSFSMEEES. 6 positions are modified to phosphoserine: serine 542, serine 548, serine 554, serine 556, serine 560, and serine 568.

Belongs to the MiT/TFE family. In terms of assembly, homodimer and heterodimer; with TFEB or MITF. Interacts with RRAGC/RagC GDP-bound and RRAGD/RagD GDP-bound; promoting its recruitment to lysosomal membrane in the presence of nutrients. Interacts with TSC22D1; the interaction is enhanced in the presence of TGF-beta. Sumoylated; does not affect dimerization with MITF. In terms of processing, phosphorylation ar Ser-47 and Ser-321 by MTOR via non-canonical mTORC1 pathway regulates its stability and subcellular location, respectively. When nutrients are present, phosphorylation by MTOR at Ser-47 promotes ubiquitination by the SCF(BTRC) complex, followed by degradation. When nutrients are present, phosphorylation by MTOR at Ser-321 also promotes association with 14-3-3/YWHA adapters and retention in the cytosol. Phosphorylation at Ser-47 plays a more critical role than phosphorylation at Ser-321 for TFE3 inactivation. Inhibition of mTORC1, starvation and lysosomal disruption, promotes dephosphorylation and transcription factor activity. Post-translationally, ubiquitinated by the SCF(BTRC) and SCF(FBXW11) complexes following phosphorylation at Ser-47 by MTOR, leading to its degradation by the proteasome. As to expression, ubiquitous in fetal and adult tissues.

The protein resides in the cytoplasm. It is found in the cytosol. It localises to the nucleus. The protein localises to the lysosome membrane. In terms of biological role, transcription factor that acts as a master regulator of lysosomal biogenesis and immune response. Specifically recognizes and binds E-box sequences (5'-CANNTG-3'); efficient DNA-binding requires dimerization with itself or with another MiT/TFE family member such as TFEB or MITF. Involved in the cellular response to amino acid availability by acting downstream of MTOR: in the presence of nutrients, TFE3 phosphorylation by MTOR promotes its inactivation. Upon starvation or lysosomal stress, inhibition of MTOR induces TFE3 dephosphorylation, resulting in transcription factor activity. Specifically recognizes and binds the CLEAR-box sequence (5'-GTCACGTGAC-3') present in the regulatory region of many lysosomal genes, leading to activate their expression, thereby playing a central role in expression of lysosomal genes. Maintains the pluripotent state of embryonic stem cells by promoting the expression of genes such as ESRRB; mTOR-dependent TFE3 cytosolic retention and inactivation promotes exit from pluripotency. Required to maintain the naive pluripotent state of hematopoietic stem cell; mTOR-dependent cytoplasmic retention of TFE3 promotes the exit of hematopoietic stem cell from pluripotency. TFE3 activity is also involved in the inhibition of neuronal progenitor differentiation. Acts as a positive regulator of browning of adipose tissue by promoting expression of target genes; mTOR-dependent phosphorylation promotes cytoplasmic retention of TFE3 and inhibits browning of adipose tissue. In association with TFEB, activates the expression of CD40L in T-cells, thereby playing a role in T-cell-dependent antibody responses in activated CD4(+) T-cells and thymus-dependent humoral immunity. Specifically recognizes the MUE3 box, a subset of E-boxes, present in the immunoglobulin enhancer. It also binds very well to a USF/MLTF site. Promotes TGF-beta-induced transcription of COL1A2; via its interaction with TSC22D1 at E-boxes in the gene proximal promoter. May regulate lysosomal positioning in response to nutrient deprivation by promoting the expression of PIP4P1. The polypeptide is Transcription factor E3 (Homo sapiens (Human)).